We begin with the raw amino-acid sequence, 168 residues long: Ribosome rescue factor SmrB (168 aa).

One can recognise a Smr domain in the interval 92–167 (LDLHGLTKEQ…GDAAILILFE (76 aa)).

It belongs to the SmrB family. As to quaternary structure, associates with collided ribosomes, but not with correctly translating polysomes.

In terms of biological role, acts as a ribosome collision sensor. Detects stalled/collided disomes (pairs of ribosomes where the leading ribosome is stalled and a second ribosome has collided with it) and endonucleolytically cleaves mRNA at the 5' boundary of the stalled ribosome. Stalled/collided disomes form a new interface (primarily via the 30S subunits) that binds SmrB. Cleaved mRNA becomes available for tmRNA ligation, leading to ribosomal subunit dissociation and rescue of stalled ribosomes. This chain is Ribosome rescue factor SmrB, found in Pasteurella multocida (strain Pm70).